Here is an 88-residue protein sequence, read N- to C-terminus: Small ribosomal subunit protein bS20 (88 aa).

The protein belongs to the bacterial ribosomal protein bS20 family.

Its function is as follows. Binds directly to 16S ribosomal RNA. The sequence is that of Small ribosomal subunit protein bS20 from Desulforamulus reducens (strain ATCC BAA-1160 / DSM 100696 / MI-1) (Desulfotomaculum reducens).